A 183-amino-acid chain; its full sequence is Streptavidin (183 aa).

Residues 1 to 24 form the signal peptide; it reads MRKIVVAAIAVSLTTVSITASASA. An Avidin-like domain is found at 37 to 159; it reads AEAGITGTWY…GHDTFTKVKP (123 aa). 2 residues coordinate biotin: tyrosine 67 and tyrosine 78. A Cell attachment site; atypical motif is present at residues 83 to 85; sequence RYD. Biotin is bound by residues tryptophan 116, tryptophan 132, and tryptophan 144.

It belongs to the avidin/streptavidin family. In terms of assembly, homotetramer.

Its subcellular location is the secreted. Functionally, the biological function of streptavidin is not known. Forms a strong non-covalent specific complex with biotin (one molecule of biotin per subunit of streptavidin). The chain is Streptavidin from Streptomyces avidinii.